A 327-amino-acid chain; its full sequence is tRNA uridine(34) hydroxylase (327 aa).

In terms of domain architecture, Rhodanese spans 130-224; that stretch reads LDEDTVVLDT…YGKDPEVQGE (95 aa). Residue Cys-184 is the Cysteine persulfide intermediate of the active site.

It belongs to the TrhO family.

The catalysed reaction is uridine(34) in tRNA + AH2 + O2 = 5-hydroxyuridine(34) in tRNA + A + H2O. In terms of biological role, catalyzes oxygen-dependent 5-hydroxyuridine (ho5U) modification at position 34 in tRNAs. The sequence is that of tRNA uridine(34) hydroxylase from Streptococcus thermophilus (strain ATCC BAA-250 / LMG 18311).